The chain runs to 376 residues: Na(+)/H(+) antiporter NhaA (376 aa).

11 helical membrane-spanning segments follow: residues 8–28, 49–69, 87–107, 117–137, 140–160, 162–182, 209–229, 248–268, 270–290, 321–341, and 349–369; these read FLAT…AAML, LSLL…LVGL, ILPC…YLAF, GWAI…ALLG, APAS…MGAV, IIAL…AIVI, LAVL…ALAI, PWVA…VSFA, IGAE…LFLG, GVAL…GLAF, and EVKI…YALL.

This sequence belongs to the NhaA Na(+)/H(+) (TC 2.A.33) antiporter family.

It localises to the cell inner membrane. It catalyses the reaction Na(+)(in) + 2 H(+)(out) = Na(+)(out) + 2 H(+)(in). Functionally, na(+)/H(+) antiporter that extrudes sodium in exchange for external protons. This Rhizorhabdus wittichii (strain DSM 6014 / CCUG 31198 / JCM 15750 / NBRC 105917 / EY 4224 / RW1) (Sphingomonas wittichii) protein is Na(+)/H(+) antiporter NhaA.